Reading from the N-terminus, the 155-residue chain is Small ribosomal subunit protein bS6 (155 aa).

A disordered region spans residues 94-155 (EKHEEGPSAM…RPRRPREDRV (62 aa)).

The protein belongs to the bacterial ribosomal protein bS6 family.

Binds together with bS18 to 16S ribosomal RNA. This Rhizobium leguminosarum bv. trifolii (strain WSM2304) protein is Small ribosomal subunit protein bS6.